A 223-amino-acid polypeptide reads, in one-letter code: Probable transaldolase (223 aa).

The active-site Schiff-base intermediate with substrate is Lys91.

It belongs to the transaldolase family. Type 3B subfamily.

Its subcellular location is the cytoplasm. It carries out the reaction D-sedoheptulose 7-phosphate + D-glyceraldehyde 3-phosphate = D-erythrose 4-phosphate + beta-D-fructose 6-phosphate. Its pathway is carbohydrate degradation; pentose phosphate pathway; D-glyceraldehyde 3-phosphate and beta-D-fructose 6-phosphate from D-ribose 5-phosphate and D-xylulose 5-phosphate (non-oxidative stage): step 2/3. Transaldolase is important for the balance of metabolites in the pentose-phosphate pathway. This chain is Probable transaldolase, found in Chlorobium phaeobacteroides (strain BS1).